The chain runs to 348 residues: MSVPTTQKAVIFETNGGKLEYKDIPVPKPKANELLINVKYSGVCHTDLHAWKGDWPLATKLPLVGGHEGAGVVVALGENVKGWKVGDYAGVKWLNGSCLNCEYCQSGAEPNCAEADLSGYTHDGSFQQYATADAVQAARIPAGTDLANVAPILCAGVTVYKALKTAELEAGQWVAISGAAGGLGSLAVQYAKAMGYRVLAIDGGEDKGEFVKSLGAETFIDFTKEKDVVEAVKKATNGGPHGVINVSVSERAIGQSTEYVRTLGKVVLVGLPAGAKISTPVFDAVIKTIQIKGSYVGNRKDTAEAVDFFTRGLIKCPIKIVGLSELPEVYKLMEEGKILGRYVLDNDK.

Residues C44, H67, C98, C101, C104, C112, and C154 each contribute to the Zn(2+) site. NAD(+) contacts are provided by residues 178 to 184 (GAAGGLG), D202, K207, 269 to 271 (VGL), and R341.

The protein belongs to the zinc-containing alcohol dehydrogenase family. Homotetramer. Zn(2+) serves as cofactor.

Its subcellular location is the cytoplasm. The enzyme catalyses a primary alcohol + NAD(+) = an aldehyde + NADH + H(+). It carries out the reaction a secondary alcohol + NAD(+) = a ketone + NADH + H(+). The sequence is that of Alcohol dehydrogenase 2 (ADH2) from Candida albicans (strain SC5314 / ATCC MYA-2876) (Yeast).